The sequence spans 224 residues: Small ribosomal subunit protein uS5 (224 aa).

The interval 1–40 is disordered; that stretch reads MAEQPAGGQGAGDSRDSRGDRDSRGRRGDGGRGGRDRDGD. A compositionally biased stretch (basic and acidic residues) spans 13–40; it reads DSRDSRGDRDSRGRRGDGGRGGRDRDGD. The region spanning 44–107 is the S5 DRBM domain; sequence YLERVVAINR…EEARKGFFRV (64 aa).

This sequence belongs to the universal ribosomal protein uS5 family. Part of the 30S ribosomal subunit. Contacts proteins S4 and S8.

In terms of biological role, with S4 and S12 plays an important role in translational accuracy. Its function is as follows. Located at the back of the 30S subunit body where it stabilizes the conformation of the head with respect to the body. The protein is Small ribosomal subunit protein uS5 of Mycolicibacterium paratuberculosis (strain ATCC BAA-968 / K-10) (Mycobacterium paratuberculosis).